A 199-amino-acid polypeptide reads, in one-letter code: MMQVLSIQNCATTKENPSSGKLIVLTGPSGVGKGTLMRSLLQRHPELYYSVSATTRAPRPGEVNGESYYFISRNKFEELLAQGEFLESAEFAGNYYGTPREAVLNQIQSGKLVVLEIELAGARQIRASFPEALSIFILPPSFEELEKRIRGRGQDSEEAIARRLQRATEEIQAADEFDIQIVNDDFEAALQAIEVALFG.

The region spanning 20 to 198 is the Guanylate kinase-like domain; that stretch reads GKLIVLTGPS…ALQAIEVALF (179 aa). 27-34 is a binding site for ATP; that stretch reads GPSGVGKG.

The protein belongs to the guanylate kinase family.

It localises to the cytoplasm. The catalysed reaction is GMP + ATP = GDP + ADP. Its function is as follows. Essential for recycling GMP and indirectly, cGMP. This is Guanylate kinase from Trichormus variabilis (strain ATCC 29413 / PCC 7937) (Anabaena variabilis).